A 117-amino-acid polypeptide reads, in one-letter code: Large ribosomal subunit protein bL20 (117 aa).

The protein belongs to the bacterial ribosomal protein bL20 family.

Binds directly to 23S ribosomal RNA and is necessary for the in vitro assembly process of the 50S ribosomal subunit. It is not involved in the protein synthesizing functions of that subunit. The chain is Large ribosomal subunit protein bL20 from Citrifermentans bemidjiense (strain ATCC BAA-1014 / DSM 16622 / JCM 12645 / Bem) (Geobacter bemidjiensis).